The chain runs to 259 residues: Global transcriptional regulator CodY (259 aa).

Residues 1–155 (MSLLSRMRKI…GATVVGMEIL (155 aa)) are GAF domain. Residues 203 to 222 (ASKIADRVGITRSVIVNALR) constitute a DNA-binding region (H-T-H motif). Serine 215 carries the post-translational modification Phosphoserine.

Belongs to the CodY family.

Its subcellular location is the cytoplasm. Its function is as follows. DNA-binding global transcriptional regulator which is involved in the adaptive response to starvation and acts by directly or indirectly controlling the expression of numerous genes in response to nutrient availability. During rapid exponential growth, CodY is highly active and represses genes whose products allow adaptation to nutrient depletion. The protein is Global transcriptional regulator CodY of Halalkalibacterium halodurans (strain ATCC BAA-125 / DSM 18197 / FERM 7344 / JCM 9153 / C-125) (Bacillus halodurans).